The chain runs to 146 residues: Large ribosomal subunit protein uL15 (146 aa).

Residues 1 to 39 (MTLKLHNLRPAPGAKTAKTRVGRGEGSKGKTAGRGTKGT) form a disordered region.

It belongs to the universal ribosomal protein uL15 family. As to quaternary structure, part of the 50S ribosomal subunit.

Binds to the 23S rRNA. This is Large ribosomal subunit protein uL15 from Nocardioides sp. (strain ATCC BAA-499 / JS614).